We begin with the raw amino-acid sequence, 484 residues long: Crt homolog 2 (484 aa).

Topologically, residues 1–57 (MSEEKLPLLSPLNENDIENDYKDENLKSDLDKLSNVKKQSIIQRFKDYLKNSISKQT) are cytoplasmic. A helical transmembrane segment spans residues 58–78 (ATVLVYVVLYILSGVINSLLL). The Vacuolar segment spans residues 79–94 (KKVMNVFTNYGFFLNQ). The helical transmembrane segment at 95–115 (LTNYGYVPIFGAIVLYKILFT) threads the bilayer. The Cytoplasmic portion of the chain corresponds to 116–128 (NDIPKDTRSFPQW). Residues 129–149 (KFVIMGALDAVTGYFVVIGGI) form a helical membrane-spanning segment. Over 150 to 154 (KTTGP) the chain is Vacuolar. The chain crosses the membrane as a helical span at residues 155–175 (LQQLLNQSVIPFTMLLSFIFL). Topologically, residues 176–178 (KER) are cytoplasmic. The chain crosses the membrane as a helical span at residues 179 to 199 (YSLIQLGGALIIIGGVVVSLI). At 200-210 (PSLTGGNTSGN) the chain is on the vacuolar side. N206 carries N-linked (GlcNAc...) asparagine glycosylation. Residues 211-231 (MLFYNFFYLISMIPYAFSNVY) form a helical membrane-spanning segment. Residues 232–244 (KAIGFSTVEDMDV) are Cytoplasmic-facing. The helical transmembrane segment at 245–265 (WYLQYFDALYQSLVGTVLFPI) threads the bilayer. The Vacuolar portion of the chain corresponds to 266-328 (NNWLPPPSDM…LGCDNCHGAW (63 aa)). An N-linked (GlcNAc...) asparagine glycan is attached at N302. The chain crosses the membrane as a helical span at residues 329 to 349 (VVVLIYMAVNVLYNVFILLVL). The Cytoplasmic segment spans residues 350–355 (KHAGAT). Residues 356 to 378 (VFSIANTLRLPLTNIAFSFKFIM) traverse the membrane as a helical segment. The Vacuolar portion of the chain corresponds to 379–382 (GSDS). A helical membrane pass occupies residues 383–403 (NPFSGLSVAGLCIILLGLGGY). Over 404–484 (RVGSMIKQKK…RNQNSIYGDQ (81 aa)) the chain is Cytoplasmic.

It belongs to the CRT-like transporter family.

It is found in the vacuole membrane. Nutrient transporter. Involved in maintaining the osmotic homeostasis of the digestive vacuole. The sequence is that of Crt homolog 2 (crtp2) from Dictyostelium discoideum (Social amoeba).